The following is a 547-amino-acid chain: Glucose-6-phosphate isomerase (547 aa).

The Proton donor role is filled by Glu-351. Catalysis depends on residues His-382 and Lys-509.

It belongs to the GPI family.

Its subcellular location is the cytoplasm. The catalysed reaction is alpha-D-glucose 6-phosphate = beta-D-fructose 6-phosphate. Its pathway is carbohydrate biosynthesis; gluconeogenesis. It functions in the pathway carbohydrate degradation; glycolysis; D-glyceraldehyde 3-phosphate and glycerone phosphate from D-glucose: step 2/4. In terms of biological role, catalyzes the reversible isomerization of glucose-6-phosphate to fructose-6-phosphate. This chain is Glucose-6-phosphate isomerase, found in Coxiella burnetii (strain Dugway 5J108-111).